A 293-amino-acid chain; its full sequence is Coatomer subunit epsilon-2 (293 aa).

The protein belongs to the COPE family. In terms of assembly, oligomeric complex that consists of at least the alpha, beta, beta', gamma, delta, epsilon and zeta subunits.

Its subcellular location is the cytoplasm. The protein localises to the golgi apparatus membrane. The protein resides in the cytoplasmic vesicle. It localises to the COPI-coated vesicle membrane. Its function is as follows. The coatomer is a cytosolic protein complex that binds to dilysine motifs and reversibly associates with Golgi non-clathrin-coated vesicles, which further mediate biosynthetic protein transport from the ER, via the Golgi up to the trans Golgi network. The coatomer complex is required for budding from Golgi membranes, and is essential for the retrograde Golgi-to-ER transport of dilysine-tagged proteins. The polypeptide is Coatomer subunit epsilon-2 (Arabidopsis thaliana (Mouse-ear cress)).